A 97-amino-acid chain; its full sequence is Co-chaperonin GroES (97 aa).

This sequence belongs to the GroES chaperonin family. In terms of assembly, heptamer of 7 subunits arranged in a ring. Interacts with the chaperonin GroEL.

The protein resides in the cytoplasm. Its function is as follows. Together with the chaperonin GroEL, plays an essential role in assisting protein folding. The GroEL-GroES system forms a nano-cage that allows encapsulation of the non-native substrate proteins and provides a physical environment optimized to promote and accelerate protein folding. GroES binds to the apical surface of the GroEL ring, thereby capping the opening of the GroEL channel. This chain is Co-chaperonin GroES, found in Pseudomonas entomophila (strain L48).